The following is a 157-amino-acid chain: Protein AE7 (157 aa).

It belongs to the MIP18 family. As to quaternary structure, part of a complex formed of AE7, CIA1, MMS19 and NAR1. Interacts with CIA1 and MMS19, but not with NAR1. As to expression, expressed in the embryo, shoot apical meristem, leaf primordia, inflorescence and all floral organs.

It is found in the nucleus. Its subcellular location is the cytoplasm. In terms of biological role, central member of the cytosolic iron-sulfur (Fe-S) protein assembly (CIA) pathway. Involved in leaf polarity formation. Promotes leaf adaxial identity. May play a role in the cell cycle progression and is required for cell proliferation. This is Protein AE7 from Arabidopsis thaliana (Mouse-ear cress).